We begin with the raw amino-acid sequence, 273 residues long: Large ribosomal subunit protein uL2 (273 aa).

The disordered stretch occupies residues Val-228 to Lys-273. The segment covering Lys-254–Lys-273 has biased composition (basic residues).

This sequence belongs to the universal ribosomal protein uL2 family. As to quaternary structure, part of the 50S ribosomal subunit. Forms a bridge to the 30S subunit in the 70S ribosome.

Functionally, one of the primary rRNA binding proteins. Required for association of the 30S and 50S subunits to form the 70S ribosome, for tRNA binding and peptide bond formation. It has been suggested to have peptidyltransferase activity; this is somewhat controversial. Makes several contacts with the 16S rRNA in the 70S ribosome. The chain is Large ribosomal subunit protein uL2 from Rickettsia peacockii (strain Rustic).